The chain runs to 713 residues: Constitutive lysine decarboxylase (713 aa).

Lys367 bears the N6-(pyridoxal phosphate)lysine mark.

The protein belongs to the Orn/Lys/Arg decarboxylase class-I family. In terms of assembly, homodecamer; built of five dimers associated in a 5-fold symmetrical double-ring. Requires pyridoxal 5'-phosphate as cofactor.

The enzyme catalyses L-lysine + H(+) = cadaverine + CO2. Plays a role in lysine utilization by acting as a lysine decarboxylase. The sequence is that of Constitutive lysine decarboxylase (ldcC) from Escherichia coli (strain K12).